The following is a 967-amino-acid chain: Isoleucine--tRNA ligase (967 aa).

The 'HIGH' region motif lies at 68 to 78 (PYANGTLHMGH). Glutamate 583 contacts L-isoleucyl-5'-AMP. Positions 624–628 (KMSKS) match the 'KMSKS' region motif. An ATP-binding site is contributed by lysine 627. Cysteine 937, cysteine 940, cysteine 957, and cysteine 960 together coordinate Zn(2+).

This sequence belongs to the class-I aminoacyl-tRNA synthetase family. IleS type 1 subfamily. In terms of assembly, monomer. Zn(2+) is required as a cofactor.

Its subcellular location is the cytoplasm. The catalysed reaction is tRNA(Ile) + L-isoleucine + ATP = L-isoleucyl-tRNA(Ile) + AMP + diphosphate. Its function is as follows. Catalyzes the attachment of isoleucine to tRNA(Ile). As IleRS can inadvertently accommodate and process structurally similar amino acids such as valine, to avoid such errors it has two additional distinct tRNA(Ile)-dependent editing activities. One activity is designated as 'pretransfer' editing and involves the hydrolysis of activated Val-AMP. The other activity is designated 'posttransfer' editing and involves deacylation of mischarged Val-tRNA(Ile). The sequence is that of Isoleucine--tRNA ligase from Prochlorococcus marinus (strain NATL2A).